Here is a 344-residue protein sequence, read N- to C-terminus: MLLSKLVDLIKSGESKFIKANIFENIDIENAASIDIALKNQISFLEENNILKDNLGKTSASAIITSNNNEILGLLESLNISNIVVENPRIAFAEVLNFLYEEINFNPGIDDSAVIKSSAKVGKNCYVGPNVYIGENSIIGDNNKIFPGTTILGNVRLGNNNVIHPNCVIYENTSIENNCVINSNTVIGSEGFGFIPQDGKWIKMPQKGCVIIKSFVEIGTNCCIDRPSVGNTFIDEGTKMDNLVQIGHGVKIGKNCAFAAQVGIAGGAVIGNSVILAGQVGVNNRVKVGNNVIASSKCGIHCDIEDGEVVSGFPAMKNKSWLRSSSVFKKLPELAKKLRQLDKK.

The active-site Proton acceptor is His-248.

Belongs to the transferase hexapeptide repeat family. LpxD subfamily. In terms of assembly, homotrimer.

The enzyme catalyses a UDP-3-O-[(3R)-3-hydroxyacyl]-alpha-D-glucosamine + a (3R)-hydroxyacyl-[ACP] = a UDP-2-N,3-O-bis[(3R)-3-hydroxyacyl]-alpha-D-glucosamine + holo-[ACP] + H(+). Its pathway is bacterial outer membrane biogenesis; LPS lipid A biosynthesis. Its function is as follows. Catalyzes the N-acylation of UDP-3-O-acylglucosamine using 3-hydroxyacyl-ACP as the acyl donor. Is involved in the biosynthesis of lipid A, a phosphorylated glycolipid that anchors the lipopolysaccharide to the outer membrane of the cell. This is UDP-3-O-acylglucosamine N-acyltransferase from Prochlorococcus marinus subsp. pastoris (strain CCMP1986 / NIES-2087 / MED4).